Here is a 404-residue protein sequence, read N- to C-terminus: Cysteine desulfurase IscS (404 aa).

Pyridoxal 5'-phosphate-binding positions include 75–76, asparagine 155, glutamine 183, and 203–205; these read AT and SGH. Lysine 206 bears the N6-(pyridoxal phosphate)lysine mark. Threonine 243 lines the pyridoxal 5'-phosphate pocket. The active-site Cysteine persulfide intermediate is the cysteine 328. Cysteine 328 is a binding site for [2Fe-2S] cluster.

This sequence belongs to the class-V pyridoxal-phosphate-dependent aminotransferase family. NifS/IscS subfamily. Homodimer. Forms a heterotetramer with IscU, interacts with other sulfur acceptors. The cofactor is pyridoxal 5'-phosphate.

It localises to the cytoplasm. The catalysed reaction is (sulfur carrier)-H + L-cysteine = (sulfur carrier)-SH + L-alanine. Its pathway is cofactor biosynthesis; iron-sulfur cluster biosynthesis. Master enzyme that delivers sulfur to a number of partners involved in Fe-S cluster assembly, tRNA modification or cofactor biosynthesis. Catalyzes the removal of elemental sulfur atoms from cysteine to produce alanine. Functions as a sulfur delivery protein for Fe-S cluster synthesis onto IscU, an Fe-S scaffold assembly protein, as well as other S acceptor proteins. This is Cysteine desulfurase IscS from Shewanella sp. (strain MR-4).